We begin with the raw amino-acid sequence, 380 residues long: Cytochrome b (380 aa).

Helical transmembrane passes span 34 to 54, 78 to 99, 114 to 134, and 179 to 199; these read FGSL…LLAM, WLIR…YLHI, WNTG…GYVL, and FFAL…IHLT. The heme b site is built by H84 and H98. 2 residues coordinate heme b: H183 and H197. An a ubiquinone-binding site is contributed by H202. 4 consecutive transmembrane segments (helical) span residues 227–247, 289–309, 321–341, and 348–368; these read TKDT…ALFS, LGGV…PLLH, LSQL…WIGS, and FIII…ILFP.

The protein belongs to the cytochrome b family. The cytochrome bc1 complex contains 11 subunits: 3 respiratory subunits (MT-CYB, CYC1 and UQCRFS1), 2 core proteins (UQCRC1 and UQCRC2) and 6 low-molecular weight proteins (UQCRH/QCR6, UQCRB/QCR7, UQCRQ/QCR8, UQCR10/QCR9, UQCR11/QCR10 and a cleavage product of UQCRFS1). This cytochrome bc1 complex then forms a dimer. The cofactor is heme b.

It localises to the mitochondrion inner membrane. In terms of biological role, component of the ubiquinol-cytochrome c reductase complex (complex III or cytochrome b-c1 complex) that is part of the mitochondrial respiratory chain. The b-c1 complex mediates electron transfer from ubiquinol to cytochrome c. Contributes to the generation of a proton gradient across the mitochondrial membrane that is then used for ATP synthesis. The polypeptide is Cytochrome b (MT-CYB) (Aptenodytes patagonicus (King penguin)).